A 705-amino-acid polypeptide reads, in one-letter code: MTKLGFLRLSYEKQDTLLKLLILSMAAVLSFSTRLFAVLRFESVIHEFDPYFNYRTTRFLAEEGFYKFHNWFDDRAWYPLGRIIGGTIYPGLMITSAAIYHVLHFFHITIDIRNVCVFLAPLFSSFTTIVTYHLTKELKDAGAGLLAAAMIAVVPGYISRSVAGSYDNEGIAIFCMLLTYYMWIKAVKTGSIYWAAKCALAYFYMVSSWGGYVFLINLIPLHVLVLMLTGRFSHRIYVAYCTVYCLGTILSMQISFVGFQPVLSSEHMAAFGVFGLCQIHAFVDYLRSKLNPQQFEVLFRSVISLVGFVLLTIGALLMLTGKISPWTGRFYSLLDPSYAKNNIPIIASVSEHQPTTWSSYYFDLQLLVFMFPVGLYYCFSNLSDARIFIIMYGVTSMYFSAVMVRLMLVLAPVMCILSGIGVSQVLSTYMKNLDISRQDKKSKKQQDSTYPIKNEVASGMILVMAFFLITYTFHSTWVTSEAYSSPSIVLSARGGDGSRIIFDDFREAYYWLRHNTPEDAKVMSWWDYGYQITAMANRTILVDNNTWNNTHISRVGQAMASTEEKAYEIMRELDVSYVLVIFGGLTGYSSDDINKFLWMVRIGGSTDTGKHIKEHDYYTPTGEFRVDREGSPVLLNCLMYKMCYYRFGQVYTEAKRPLGYDRVRNAEIGNKDFELDVLEEAYTTEHWLVRIYKVKDLDNRGLSRT.

Topologically, residues 1–17 are cytoplasmic; sequence MTKLGFLRLSYEKQDTL. The chain crosses the membrane as a helical span at residues 18 to 38; it reads LKLLILSMAAVLSFSTRLFAV. The Lumenal portion of the chain corresponds to 39-119; the sequence is LRFESVIHEF…IDIRNVCVFL (81 aa). The DXD motif 1 signature appears at 47 to 49; that stretch reads EFD. A Mn(2+)-binding site is contributed by aspartate 49. The helical transmembrane segment at 120 to 138 threads the bilayer; the sequence is APLFSSFTTIVTYHLTKEL. Residues 139-140 are Cytoplasmic-facing; sequence KD. The helical transmembrane segment at 141-158 threads the bilayer; sequence AGAGLLAAAMIAVVPGYI. At 159 to 169 the chain is on the lumenal side; that stretch reads SRSVAGSYDNE. Mn(2+) is bound by residues aspartate 167 and glutamate 169. Residues 167–169 carry the DXD motif 2 motif; the sequence is DNE. A helical membrane pass occupies residues 170–189; the sequence is GIAIFCMLLTYYMWIKAVKT. Topologically, residues 190 to 191 are cytoplasmic; the sequence is GS. The chain crosses the membrane as a helical span at residues 192 to 206; sequence IYWAAKCALAYFYMV. The Lumenal segment spans residues 207–211; sequence SSWGG. Residues 212–228 form a helical membrane-spanning segment; it reads YVFLINLIPLHVLVLML. The Cytoplasmic portion of the chain corresponds to 229 to 233; that stretch reads TGRFS. Residues 234–259 form a helical membrane-spanning segment; sequence HRIYVAYCTVYCLGTILSMQISFVGF. Topologically, residues 260 to 267 are lumenal; the sequence is QPVLSSEH. A helical transmembrane segment spans residues 268 to 287; the sequence is MAAFGVFGLCQIHAFVDYLR. The Cytoplasmic segment spans residues 288–300; sequence SKLNPQQFEVLFR. The helical transmembrane segment at 301-321 threads the bilayer; the sequence is SVISLVGFVLLTIGALLMLTG. The Lumenal segment spans residues 322 to 356; sequence KISPWTGRFYSLLDPSYAKNNIPIIASVSEHQPTT. The SVSE motif motif lies at 348–351; sequence SVSE. Residues 357–379 form a helical membrane-spanning segment; the sequence is WSSYYFDLQLLVFMFPVGLYYCF. Residues 380–385 are Cytoplasmic-facing; sequence SNLSDA. The chain crosses the membrane as a helical span at residues 386 to 402; it reads RIFIIMYGVTSMYFSAV. Topologically, residues 403 to 406 are lumenal; it reads MVRL. Arginine 405 contributes to the dolichyl diphosphooligosaccharide binding site. A helical membrane pass occupies residues 407–428; the sequence is MLVLAPVMCILSGIGVSQVLST. Residues 429-453 are Cytoplasmic-facing; the sequence is YMKNLDISRQDKKSKKQQDSTYPIK. A helical transmembrane segment spans residues 454–473; sequence NEVASGMILVMAFFLITYTF. Over 474–705 the chain is Lumenal; sequence HSTWVTSEAY…DLDNRGLSRT (232 aa). An interacts with target acceptor peptide in protein substrate region spans residues 525–527; that stretch reads WWD. The short motif at 525–529 is the WWDYG motif element; sequence WWDYG. Tyrosine 530 provides a ligand contact to dolichyl diphosphooligosaccharide. Residues asparagine 537 and asparagine 544 are each glycosylated (N-linked (GlcNAc...) asparagine). A glycan (N-linked (GlcNAc...) (high mannose) asparagine) is linked at asparagine 548. Residues 592–599 carry the DK motif motif; the sequence is DINKFLWM.

This sequence belongs to the STT3 family. Component of the oligosaccharyltransferase (OST) complex. There are 2 OST complexes, OST-A and OST-B, which contain STT3A or STT3B as catalytic subunit, respectively. OST-A and OST-B contain common core subunits RPN1, RPN2, OST48, OST4, DAD1 and TMEM258, and OST-A contains DC2/OSTC and KRTCAP2/KCP2 specific accessory subunits. OST-A complex assembly occurs through the formation of 3 subcomplexes. Subcomplex 1 contains RPN1 and TMEM258, subcomplex 2 contains the OST-A-specific subunits STT3A, DC2/OSTC, and KCP2 as well as the core subunit OST4, and subcomplex 3 contains RPN2, DAD1, and OST48. The OST-A complex can form stable complexes with the Sec61 complex or with both the Sec61 and TRAP complexes. The cofactor is Mg(2+). Mn(2+) serves as cofactor.

The protein localises to the endoplasmic reticulum membrane. It carries out the reaction a di-trans,poly-cis-dolichyl diphosphooligosaccharide + L-asparaginyl-[protein] = N(4)-(oligosaccharide-(1-&gt;4)-N-acetyl-beta-D-glucosaminyl-(1-&gt;4)-N-acetyl-beta-D-glucosaminyl)-L-asparaginyl-[protein] + a di-trans,poly-cis-dolichyl diphosphate + H(+). It participates in protein modification; protein glycosylation. In terms of biological role, catalytic subunit of the oligosaccharyl transferase (OST) complex that catalyzes the initial transfer of a defined glycan (Glc(3)Man(9)GlcNAc(2) in eukaryotes) from the lipid carrier dolichol-pyrophosphate to an asparagine residue within an Asn-X-Ser/Thr consensus motif in nascent polypeptide chains, the first step in protein N-glycosylation. N-glycosylation occurs cotranslationally and the complex associates with the Sec61 complex at the channel-forming translocon complex that mediates protein translocation across the endoplasmic reticulum (ER). All subunits are required for a maximal enzyme activity. This subunit contains the active site and the acceptor peptide and donor lipid-linked oligosaccharide (LLO) binding pockets. STT3A is present in the majority of OST complexes and mediates cotranslational N-glycosylation of most sites on target proteins, while STT3B-containing complexes are required for efficient post-translational glycosylation and mediate glycosylation of sites that have been skipped by STT3A. STT3A-containing OST-A complex is also required to prevent hyperglycosylation of some target proteins by preventing glycosylation of facultative sites before folding of target proteins is completed. The polypeptide is Dolichyl-diphosphooligosaccharide--protein glycosyltransferase subunit STT3A (Bos taurus (Bovine)).